The sequence spans 484 residues: Malonate-semialdehyde dehydrogenase 1 (484 aa).

Residues Phe-153, Lys-177, Glu-180, Arg-181, Ser-230, and Thr-252 each coordinate NAD(+). The active-site Nucleophile is Cys-285. Glu-385 contributes to the NAD(+) binding site.

Belongs to the aldehyde dehydrogenase family. IolA subfamily. Homotetramer.

The enzyme catalyses 3-oxopropanoate + NAD(+) + CoA + H2O = hydrogencarbonate + acetyl-CoA + NADH + H(+). The catalysed reaction is 2-methyl-3-oxopropanoate + NAD(+) + CoA + H2O = propanoyl-CoA + hydrogencarbonate + NADH + H(+). Its pathway is polyol metabolism; myo-inositol degradation into acetyl-CoA; acetyl-CoA from myo-inositol: step 7/7. In terms of biological role, catalyzes the oxidation of malonate semialdehyde (MSA) and methylmalonate semialdehyde (MMSA) into acetyl-CoA and propanoyl-CoA, respectively. Is involved in a myo-inositol catabolic pathway. Bicarbonate, and not CO2, is the end-product of the enzymatic reaction. The chain is Malonate-semialdehyde dehydrogenase 1 from Geobacillus thermodenitrificans (strain NG80-2).